A 696-amino-acid polypeptide reads, in one-letter code: Glycine--tRNA ligase beta subunit (696 aa).

Belongs to the class-II aminoacyl-tRNA synthetase family. Tetramer of two alpha and two beta subunits.

The protein resides in the cytoplasm. It carries out the reaction tRNA(Gly) + glycine + ATP = glycyl-tRNA(Gly) + AMP + diphosphate. The protein is Glycine--tRNA ligase beta subunit of Methylorubrum extorquens (strain CM4 / NCIMB 13688) (Methylobacterium extorquens).